Reading from the N-terminus, the 1273-residue chain is DNA-directed RNA polymerase subunit beta (1273 aa).

Belongs to the RNA polymerase beta chain family. In terms of assembly, the RNAP catalytic core consists of 2 alpha, 1 beta, 1 beta' and 1 omega subunit. When a sigma factor is associated with the core the holoenzyme is formed, which can initiate transcription.

The catalysed reaction is RNA(n) + a ribonucleoside 5'-triphosphate = RNA(n+1) + diphosphate. Functionally, DNA-dependent RNA polymerase catalyzes the transcription of DNA into RNA using the four ribonucleoside triphosphates as substrates. This Aster yellows witches'-broom phytoplasma (strain AYWB) protein is DNA-directed RNA polymerase subunit beta.